Here is a 256-residue protein sequence, read N- to C-terminus: Thiazole synthase (256 aa).

Catalysis depends on lysine 95, which acts as the Schiff-base intermediate with DXP. 1-deoxy-D-xylulose 5-phosphate-binding positions include glycine 156, 182–183, and 204–205; these read AG and NT.

Belongs to the ThiG family. In terms of assembly, homotetramer. Forms heterodimers with either ThiH or ThiS.

It is found in the cytoplasm. The enzyme catalyses [ThiS sulfur-carrier protein]-C-terminal-Gly-aminoethanethioate + 2-iminoacetate + 1-deoxy-D-xylulose 5-phosphate = [ThiS sulfur-carrier protein]-C-terminal Gly-Gly + 2-[(2R,5Z)-2-carboxy-4-methylthiazol-5(2H)-ylidene]ethyl phosphate + 2 H2O + H(+). It participates in cofactor biosynthesis; thiamine diphosphate biosynthesis. In terms of biological role, catalyzes the rearrangement of 1-deoxy-D-xylulose 5-phosphate (DXP) to produce the thiazole phosphate moiety of thiamine. Sulfur is provided by the thiocarboxylate moiety of the carrier protein ThiS. In vitro, sulfur can be provided by H(2)S. The protein is Thiazole synthase of Salmonella arizonae (strain ATCC BAA-731 / CDC346-86 / RSK2980).